We begin with the raw amino-acid sequence, 514 residues long: UDP-N-acetylmuramate--L-alanine ligase (514 aa).

ATP is bound at residue G127–T133. Residues I495–G505 show a composition bias toward low complexity. The tract at residues I495–G514 is disordered.

It belongs to the MurCDEF family.

The protein localises to the cytoplasm. It carries out the reaction UDP-N-acetyl-alpha-D-muramate + L-alanine + ATP = UDP-N-acetyl-alpha-D-muramoyl-L-alanine + ADP + phosphate + H(+). Its pathway is cell wall biogenesis; peptidoglycan biosynthesis. Functionally, cell wall formation. The polypeptide is UDP-N-acetylmuramate--L-alanine ligase (Salinispora tropica (strain ATCC BAA-916 / DSM 44818 / JCM 13857 / NBRC 105044 / CNB-440)).